An 85-amino-acid chain; its full sequence is Large ribosomal subunit protein bL27 (85 aa).

Residues 1–21 (MAHKKAGGSTRNGRDSESKRL) are disordered.

This sequence belongs to the bacterial ribosomal protein bL27 family.

The sequence is that of Large ribosomal subunit protein bL27 from Pseudomonas putida (strain W619).